A 172-amino-acid chain; its full sequence is 3-hydroxydecanoyl-[acyl-carrier-protein] dehydratase (172 aa).

The active site involves histidine 71.

Belongs to the thioester dehydratase family. FabA subfamily. As to quaternary structure, homodimer.

The protein localises to the cytoplasm. The enzyme catalyses a (3R)-hydroxyacyl-[ACP] = a (2E)-enoyl-[ACP] + H2O. The catalysed reaction is (3R)-hydroxydecanoyl-[ACP] = (2E)-decenoyl-[ACP] + H2O. It catalyses the reaction (2E)-decenoyl-[ACP] = (3Z)-decenoyl-[ACP]. It functions in the pathway lipid metabolism; fatty acid biosynthesis. Functionally, necessary for the introduction of cis unsaturation into fatty acids. Catalyzes the dehydration of (3R)-3-hydroxydecanoyl-ACP to E-(2)-decenoyl-ACP and then its isomerization to Z-(3)-decenoyl-ACP. Can catalyze the dehydratase reaction for beta-hydroxyacyl-ACPs with saturated chain lengths up to 16:0, being most active on intermediate chain length. The chain is 3-hydroxydecanoyl-[acyl-carrier-protein] dehydratase from Pseudoalteromonas atlantica (strain T6c / ATCC BAA-1087).